Consider the following 97-residue polypeptide: Large ribosomal subunit protein uL23 (97 aa).

This sequence belongs to the universal ribosomal protein uL23 family. Part of the 50S ribosomal subunit. Contacts protein L29, and trigger factor when it is bound to the ribosome.

Its function is as follows. One of the early assembly proteins it binds 23S rRNA. One of the proteins that surrounds the polypeptide exit tunnel on the outside of the ribosome. Forms the main docking site for trigger factor binding to the ribosome. The protein is Large ribosomal subunit protein uL23 of Clostridium botulinum (strain ATCC 19397 / Type A).